The chain runs to 167 residues: Small ribosomal subunit protein uS9 (167 aa).

The segment at 136-167 (KRAGFLTRDPRATERKKYGLKKARKAPQYSKR) is disordered. Residues 143-152 (RDPRATERKK) are compositionally biased toward basic and acidic residues. Residues 153–167 (YGLKKARKAPQYSKR) show a composition bias toward basic residues.

Belongs to the universal ribosomal protein uS9 family.

The sequence is that of Small ribosomal subunit protein uS9 from Nocardia farcinica (strain IFM 10152).